The chain runs to 333 residues: Replication factor C subunit 2 (333 aa).

Ala2 is subject to N-acetylalanine. 55–62 (GPPGTGKT) contacts ATP.

This sequence belongs to the activator 1 small subunits family. As to quaternary structure, heterotetramer of subunits RFC2, RFC3, RFC4 and RFC5 that can form a complex with RFC1.

The protein resides in the nucleus. Functionally, may be involved in DNA replication and thus regulate cell proliferation. This is Replication factor C subunit 2 (RFC2) from Arabidopsis thaliana (Mouse-ear cress).